A 1035-amino-acid chain; its full sequence is FACT complex subunit SPT16 (1035 aa).

Residues 208–234 (EELKITNAKLSDKIENKIDDVKFLKQL) adopt a coiled-coil conformation. The segment at 448 to 496 (NNEEEDNNKKKSSPATKVPSKPDRNSKILRTKLRGEARGGAEDAQKEQI) is disordered. Residues 480 to 496 (LRGEARGGAEDAQKEQI) are compositionally biased toward basic and acidic residues. Position 526 is a phosphoserine (Ser-526). Residues 636–666 (MSETFKQIADLKKEATKREQERKALADVVQQ) are a coiled coil. Ser-765 carries the phosphoserine modification. Disordered regions lie at residues 768–796 (SVDE…QEQE) and 956–1035 (GSDD…NFRD). Over residues 957–1019 (SDDEASDESE…ESEEGEDWDE (63 aa)) the composition is skewed to acidic residues. A coiled-coil region spans residues 959–983 (DEASDESEEEVSEYEASEDDVSDES). A compositionally biased stretch (basic and acidic residues) spans 1020 to 1035 (LEKKAARADRGANFRD).

Belongs to the peptidase M24 family. SPT16 subfamily. In terms of assembly, forms a stable heterodimer with POB3. The SPT16-POB3 dimer weakly associates with multiple molecules of NHP6 (NHP6A or NHP6B) to form the FACT (yFACT or SNP) complex. The FACT complex interacts with the CK2 (casein kinase II) complex subunits CKA1, CKA2, CKB1 and CKB2 and the components of the transcription machinery CHD1, CTR9, PAF1 and CDC73. The FACT complex interacts with the PAF1 complex. Interacts with POL1. Interacts with SAS3. Interacts with YTA7.

It is found in the nucleus. Its subcellular location is the chromosome. In terms of biological role, component of the FACT complex, a general chromatin factor that acts to reorganize nucleosomes. The FACT complex is involved in multiple processes that require DNA as a template such as mRNA elongation, DNA replication and DNA repair. During transcription elongation the FACT complex acts as a histone chaperone that both destabilizes and restores nucleosomal structure. It facilitates the passage of RNA polymerase II and transcription by promoting the dissociation of one histone H2A-H2B dimer from the nucleosome, then subsequently promotes the reestablishment of the nucleosome following the passage of RNA polymerase II. Transcription elongation is promoted by the repression of transcription initiation from cryptic sites. Also acts in establishing transcription initiation complexes and promotes SPT15/TBP-binding to a TATA box. Together with replication factor-A protein (RPA), FACT may play a role in nucleosome deposition during DNA replication. This Saccharomyces cerevisiae (strain ATCC 204508 / S288c) (Baker's yeast) protein is FACT complex subunit SPT16 (SPT16).